The sequence spans 261 residues: Phosphatidylglycerol--prolipoprotein diacylglyceryl transferase (261 aa).

The next 4 membrane-spanning stretches (helical) occupy residues Phe17–Gly37, Leu59–Tyr79, Ile94–Trp114, and Thr121–Gly141. Arg142 is a binding site for a 1,2-diacyl-sn-glycero-3-phospho-(1'-sn-glycerol). 2 helical membrane passes run Pro174 to Tyr194 and Phe228 to Ile248.

It belongs to the Lgt family.

The protein resides in the cell inner membrane. It carries out the reaction L-cysteinyl-[prolipoprotein] + a 1,2-diacyl-sn-glycero-3-phospho-(1'-sn-glycerol) = an S-1,2-diacyl-sn-glyceryl-L-cysteinyl-[prolipoprotein] + sn-glycerol 1-phosphate + H(+). It functions in the pathway protein modification; lipoprotein biosynthesis (diacylglyceryl transfer). In terms of biological role, catalyzes the transfer of the diacylglyceryl group from phosphatidylglycerol to the sulfhydryl group of the N-terminal cysteine of a prolipoprotein, the first step in the formation of mature lipoproteins. This Polynucleobacter asymbioticus (strain DSM 18221 / CIP 109841 / QLW-P1DMWA-1) (Polynucleobacter necessarius subsp. asymbioticus) protein is Phosphatidylglycerol--prolipoprotein diacylglyceryl transferase.